A 252-amino-acid polypeptide reads, in one-letter code: NAC domain-containing protein 23 (252 aa).

The NAC domain maps to 12–177 (MPPGFRFQPT…EMVLCRISNK (166 aa)). Residues 110-183 (TAVKRRFVFY…ISNKDLPKPP (74 aa)) mediate DNA binding. A disordered region spans residues 225-252 (VDDAAAADDDPGDLDEEIDDSMQRNHGG). Over residues 229-244 (AAADDDPGDLDEEIDD) the composition is skewed to acidic residues.

In terms of assembly, forms heterodimers with NAC26. In terms of tissue distribution, expressed in stems and panicles. Expressed in developing seeds.

Its subcellular location is the nucleus. The protein localises to the cytoplasm. In terms of biological role, transcription factor involved in the regulation of seed size. Possesses transactivation activity in yeast. This Oryza sativa subsp. indica (Rice) protein is NAC domain-containing protein 23.